The chain runs to 667 residues: UvrABC system protein B (667 aa).

The Helicase ATP-binding domain occupies 24–195; the sequence is EGLRRGDRFQ…SSGGVFHLRG (172 aa). 37-44 lines the ATP pocket; that stretch reads GVTGSGKT. The short motif at 90 to 113 is the Beta-hairpin element; sequence YYDYYQPEAYIPTKDLYIEKDADI. The Helicase C-terminal domain occupies 428–581; sequence QVDDFIEEVQ…QLMYNIEHDI (154 aa). Residues 626 to 661 form the UVR domain; it reads EEYLALLEEEMWRASSELRYEDAAMLRDEMLRIKRE.

The protein belongs to the UvrB family. In terms of assembly, forms a heterotetramer with UvrA during the search for lesions. Interacts with UvrC in an incision complex.

It localises to the cytoplasm. Functionally, the UvrABC repair system catalyzes the recognition and processing of DNA lesions. A damage recognition complex composed of 2 UvrA and 2 UvrB subunits scans DNA for abnormalities. Upon binding of the UvrA(2)B(2) complex to a putative damaged site, the DNA wraps around one UvrB monomer. DNA wrap is dependent on ATP binding by UvrB and probably causes local melting of the DNA helix, facilitating insertion of UvrB beta-hairpin between the DNA strands. Then UvrB probes one DNA strand for the presence of a lesion. If a lesion is found the UvrA subunits dissociate and the UvrB-DNA preincision complex is formed. This complex is subsequently bound by UvrC and the second UvrB is released. If no lesion is found, the DNA wraps around the other UvrB subunit that will check the other stand for damage. In Kosmotoga olearia (strain ATCC BAA-1733 / DSM 21960 / TBF 19.5.1), this protein is UvrABC system protein B.